A 692-amino-acid chain; its full sequence is Elongation factor G (692 aa).

The region spanning 8–283 (DRYRNIGIMA…AVVDFLPSPL (276 aa)) is the tr-type G domain. GTP is bound by residues 17-24 (AHIDAGKT), 81-85 (DTPGH), and 135-138 (NKMD).

Belongs to the TRAFAC class translation factor GTPase superfamily. Classic translation factor GTPase family. EF-G/EF-2 subfamily.

Its subcellular location is the cytoplasm. Functionally, catalyzes the GTP-dependent ribosomal translocation step during translation elongation. During this step, the ribosome changes from the pre-translocational (PRE) to the post-translocational (POST) state as the newly formed A-site-bound peptidyl-tRNA and P-site-bound deacylated tRNA move to the P and E sites, respectively. Catalyzes the coordinated movement of the two tRNA molecules, the mRNA and conformational changes in the ribosome. This chain is Elongation factor G, found in Rhodospirillum rubrum (strain ATCC 11170 / ATH 1.1.1 / DSM 467 / LMG 4362 / NCIMB 8255 / S1).